The sequence spans 36 residues: Pancreatic polypeptide (36 aa).

Tyrosine 36 is subject to Tyrosine amide.

This sequence belongs to the NPY family.

It localises to the secreted. Functionally, hormone secreted by pancreatic cells that acts as a regulator of pancreatic and gastrointestinal functions probably by signaling through the G protein-coupled receptor NPY4R2. The sequence is that of Pancreatic polypeptide (PPY) from Equus przewalskii (Przewalski's horse).